Here is a 236-residue protein sequence, read N- to C-terminus: 2-C-methyl-D-erythritol 4-phosphate cytidylyltransferase (236 aa).

The protein belongs to the IspD/TarI cytidylyltransferase family. IspD subfamily. As to quaternary structure, homodimer.

It carries out the reaction 2-C-methyl-D-erythritol 4-phosphate + CTP + H(+) = 4-CDP-2-C-methyl-D-erythritol + diphosphate. It functions in the pathway isoprenoid biosynthesis; isopentenyl diphosphate biosynthesis via DXP pathway; isopentenyl diphosphate from 1-deoxy-D-xylulose 5-phosphate: step 2/6. Its function is as follows. Catalyzes the formation of 4-diphosphocytidyl-2-C-methyl-D-erythritol from CTP and 2-C-methyl-D-erythritol 4-phosphate (MEP). The protein is 2-C-methyl-D-erythritol 4-phosphate cytidylyltransferase of Escherichia coli O45:K1 (strain S88 / ExPEC).